The following is a 427-amino-acid chain: 3-phosphoshikimate 1-carboxyvinyltransferase (427 aa).

3-phosphoshikimate is bound by residues lysine 22, serine 23, and arginine 27. Phosphoenolpyruvate is bound at residue lysine 22. Positions 96 and 124 each coordinate phosphoenolpyruvate. 3-phosphoshikimate contacts are provided by serine 170, serine 171, glutamine 172, serine 198, aspartate 313, asparagine 336, and lysine 340. Glutamine 172 lines the phosphoenolpyruvate pocket. The Proton acceptor role is filled by aspartate 313. Residues arginine 344, arginine 386, and lysine 411 each coordinate phosphoenolpyruvate.

This sequence belongs to the EPSP synthase family. Monomer.

The protein localises to the cytoplasm. The enzyme catalyses 3-phosphoshikimate + phosphoenolpyruvate = 5-O-(1-carboxyvinyl)-3-phosphoshikimate + phosphate. It participates in metabolic intermediate biosynthesis; chorismate biosynthesis; chorismate from D-erythrose 4-phosphate and phosphoenolpyruvate: step 6/7. Its function is as follows. Catalyzes the transfer of the enolpyruvyl moiety of phosphoenolpyruvate (PEP) to the 5-hydroxyl of shikimate-3-phosphate (S3P) to produce enolpyruvyl shikimate-3-phosphate and inorganic phosphate. The chain is 3-phosphoshikimate 1-carboxyvinyltransferase from Aeromonas salmonicida (strain A449).